The primary structure comprises 274 residues: tRNA pseudouridine synthase A (274 aa).

The active-site Nucleophile is Asp57. Residue Tyr115 participates in substrate binding.

It belongs to the tRNA pseudouridine synthase TruA family. In terms of assembly, homodimer.

The catalysed reaction is uridine(38/39/40) in tRNA = pseudouridine(38/39/40) in tRNA. Functionally, formation of pseudouridine at positions 38, 39 and 40 in the anticodon stem and loop of transfer RNAs. In Frankia casuarinae (strain DSM 45818 / CECT 9043 / HFP020203 / CcI3), this protein is tRNA pseudouridine synthase A.